Consider the following 448-residue polypeptide: MSKKLISIVDVKDYVGQEVTIGAWVTNKSGKGKIAFVQLRDGSAFFQGVAFKPNFIEKYGEESGLEKFDVIKRLNQETSVYVTGIVKEDERSKFGYELDITDLEIIGESHEYPITPKEHGTDFLMDNRHLWLRSRKQMAVMQIRNAIIYATYEFFDQNGFIKFDSPILSENAAEDSTELFETDYFGKPAFLSQSGQLYLEAGAMALGRVFDFGPVFRAEKSKTRRHLTEFWMMDAEYSFLSHEESLDLQEAYVKALIQGVLDRAPQALDILERDVEALKRYITEPFKRVSYDDAITLLQEHEADEDTDYEHLEHGDDFGSPHETWISNYFGVPTFVVNYPASFKAFYMKPVPGNPERVLCADLLAPEGYGEIIGGSMREDNYDALVAKMDELGMDKSEYDFYLDLRKYGSVPHGGFGIGIERMVTFVAGTKHIREAIPFPRMLHRIRP.

It belongs to the class-II aminoacyl-tRNA synthetase family. Homodimer.

It is found in the cytoplasm. The enzyme catalyses tRNA(Asn) + L-asparagine + ATP = L-asparaginyl-tRNA(Asn) + AMP + diphosphate + H(+). The chain is Asparagine--tRNA ligase from Streptococcus pyogenes serotype M12 (strain MGAS9429).